We begin with the raw amino-acid sequence, 223 residues long: Global nitrogen regulator (223 aa).

In terms of domain architecture, HTH crp-type spans 143-216 (RDMGSRLVSF…KKKITVHKPV (74 aa)). Residues 176-195 (HQAIAEAIGSTRVTVTRLLG) constitute a DNA-binding region (H-T-H motif).

In terms of biological role, required for full expression of proteins subject to ammonium repression. Transcriptional activator of genes subject to nitrogen control. Has affinity for the xisA upstream region. Binds to a 66 bp region containing three repeats of the consensus recognition sequence 5'-ACATT-3'. The chain is Global nitrogen regulator (ntcA) from Nostoc sp. (strain PCC 7120 / SAG 25.82 / UTEX 2576).